A 606-amino-acid polypeptide reads, in one-letter code: Elongation factor 4 (606 aa).

The 183-residue stretch at 10–192 (ENIRNFSIIA…AIVQQLPAPK (183 aa)) folds into the tr-type G domain. GTP is bound by residues 22 to 27 (DHGKST) and 139 to 142 (NKID).

The protein belongs to the TRAFAC class translation factor GTPase superfamily. Classic translation factor GTPase family. LepA subfamily.

It localises to the cell membrane. The catalysed reaction is GTP + H2O = GDP + phosphate + H(+). Required for accurate and efficient protein synthesis under certain stress conditions. May act as a fidelity factor of the translation reaction, by catalyzing a one-codon backward translocation of tRNAs on improperly translocated ribosomes. Back-translocation proceeds from a post-translocation (POST) complex to a pre-translocation (PRE) complex, thus giving elongation factor G a second chance to translocate the tRNAs correctly. Binds to ribosomes in a GTP-dependent manner. The chain is Elongation factor 4 from Lawsonia intracellularis (strain PHE/MN1-00).